Reading from the N-terminus, the 241-residue chain is Pre-rRNA-processing protein pno1 (241 aa).

The segment at 48–71 (APAKTSAEKKRGAKPQMRRVPIPP) is disordered. Thr52 carries the post-translational modification Phosphothreonine. The region spanning 162–214 (GDHLSRAIGRIAGQGGKTKFAIENASRTRIVLADSKIHILGGFTNIRIAKDAV) is the KH domain.

Belongs to the PNO1 family. In terms of assembly, component of the small ribosomal subunit, ribosomal RNA processing complex (SSU RRP complex).

It is found in the cytoplasm. The protein localises to the nucleus. The protein resides in the nucleolus. Its function is as follows. Required for small ribosomal subunit (SSU) synthesis. Has a role in the processing of early nucleolar and late cytoplasmic pre-RNA species. The sequence is that of Pre-rRNA-processing protein pno1 (rbp28) from Schizosaccharomyces pombe (strain 972 / ATCC 24843) (Fission yeast).